We begin with the raw amino-acid sequence, 156 residues long: MSRRHRAEKREIFPDPKFGDRDLTKFMNYIMLDGKKSVAERIVYGALEIVEEKLKREPIRVFHDALDNVAPEVEVRSRRVGGATYQVPVEVRAERKKALAIRWLTGAARGRNENTMRERLAAEMMDASANRGTAVKKREDTHRMAEANRAFSHYRW.

Belongs to the universal ribosomal protein uS7 family. As to quaternary structure, part of the 30S ribosomal subunit. Contacts proteins S9 and S11.

In terms of biological role, one of the primary rRNA binding proteins, it binds directly to 16S rRNA where it nucleates assembly of the head domain of the 30S subunit. Is located at the subunit interface close to the decoding center, probably blocks exit of the E-site tRNA. The chain is Small ribosomal subunit protein uS7 from Maricaulis maris (strain MCS10) (Caulobacter maris).